A 411-amino-acid polypeptide reads, in one-letter code: Argininosuccinate synthase (411 aa).

Residues 11–19 (AYSGGLDTS) and Ala-37 each bind ATP. The L-citrulline site is built by Tyr-88 and Ser-93. 116–124 (SHGATGKGN) contacts ATP. Thr-120, Asn-124, and Asp-125 together coordinate L-aspartate. Asn-124 lines the L-citrulline pocket. 5 residues coordinate L-citrulline: Arg-128, Ser-181, Ser-190, Glu-271, and Tyr-283.

Belongs to the argininosuccinate synthase family. As to quaternary structure, homotetramer.

It is found in the cytoplasm. It localises to the cytosol. It carries out the reaction L-citrulline + L-aspartate + ATP = 2-(N(omega)-L-arginino)succinate + AMP + diphosphate + H(+). Its pathway is amino-acid biosynthesis; L-arginine biosynthesis; L-arginine from L-ornithine and carbamoyl phosphate: step 2/3. It functions in the pathway nitrogen metabolism; urea cycle; (N(omega)-L-arginino)succinate from L-aspartate and L-citrulline: step 1/1. In terms of biological role, one of the enzymes of the urea cycle, the metabolic pathway transforming neurotoxic amonia produced by protein catabolism into inocuous urea in the liver of ureotelic animals. Catalyzes the formation of arginosuccinate from aspartate, citrulline and ATP and together with ASL it is responsible for the biosynthesis of arginine in most body tissues. The polypeptide is Argininosuccinate synthase (Xenopus laevis (African clawed frog)).